We begin with the raw amino-acid sequence, 115 residues long: MQHLVFVYGTLRHGESNHTYLQHSQLLGQFETKPEYALYDLGAYPGLVEGHQSVHGEVYLVDEHTLAQLDILEDVPVEYRRDTIETPFGTAWIYIYQETHRLHSLIDSGDWCQRV.

Substrate is bound at residue 8 to 11 (YGTL). Catalysis depends on glutamate 73, which acts as the Proton acceptor.

Belongs to the gamma-glutamylcyclotransferase family.

Its function is as follows. Putative gamma-glutamylcyclotransferase. In Vibrio cholerae serotype O1 (strain ATCC 39315 / El Tor Inaba N16961), this protein is Putative gamma-glutamylcyclotransferase VC_2546.